The primary structure comprises 673 residues: Pesticin receptor (673 aa).

Residues 1-22 (MKMTRLYPLALGGLLLPAIANA) form the signal peptide. The TonB box signature appears at 30 to 37 (STLEVTAS). A TBDR plug domain is found at 41-155 (SRSASANNVS…QGGIINIVTQ (115 aa)). Residues 160 to 672 (TPRGYIEGGV…TVGINTRIDF (513 aa)) form the TBDR beta-barrel domain. The TonB C-terminal box motif lies at 657–673 (QVNMGRTVGINTRIDFF).

The protein belongs to the TonB-dependent receptor family.

The protein localises to the cell outer membrane. Receptor for the bacteriocin pesticin and for the siderophore yersiniabactin. This Yersinia enterocolitica protein is Pesticin receptor (fyuA).